A 104-amino-acid polypeptide reads, in one-letter code: Phosphoribosyl-ATP pyrophosphatase (104 aa).

The protein belongs to the PRA-PH family.

The protein localises to the cytoplasm. The enzyme catalyses 1-(5-phospho-beta-D-ribosyl)-ATP + H2O = 1-(5-phospho-beta-D-ribosyl)-5'-AMP + diphosphate + H(+). The protein operates within amino-acid biosynthesis; L-histidine biosynthesis; L-histidine from 5-phospho-alpha-D-ribose 1-diphosphate: step 2/9. This chain is Phosphoribosyl-ATP pyrophosphatase, found in Methanosarcina barkeri (strain Fusaro / DSM 804).